A 195-amino-acid polypeptide reads, in one-letter code: Small ribosomal subunit protein uS4 (195 aa).

The region spanning 92 to 152 (SRLDNIVYRL…EKHKHKANKN (61 aa)) is the S4 RNA-binding domain.

This sequence belongs to the universal ribosomal protein uS4 family. In terms of assembly, part of the 30S ribosomal subunit. Contacts protein S5. The interaction surface between S4 and S5 is involved in control of translational fidelity.

Its function is as follows. One of the primary rRNA binding proteins, it binds directly to 16S rRNA where it nucleates assembly of the body of the 30S subunit. Functionally, with S5 and S12 plays an important role in translational accuracy. The sequence is that of Small ribosomal subunit protein uS4 from Karelsulcia muelleri (strain GWSS) (Sulcia muelleri).